The sequence spans 513 residues: uncharacterized protein (513 aa).

One can recognise a TRAM domain in the interval Asn-3–Lys-61. Gln-309, Tyr-338, Asp-359, and Asp-407 together coordinate S-adenosyl-L-methionine. Cys-434 acts as the Nucleophile in catalysis.

This sequence belongs to the class I-like SAM-binding methyltransferase superfamily. RNA M5U methyltransferase family.

This is an uncharacterized protein from Lactococcus lactis subsp. lactis (strain IL1403) (Streptococcus lactis).